Here is a 309-residue protein sequence, read N- to C-terminus: Cysteinyl leukotriene receptor 2 (309 aa).

Residues 1 to 26 lie on the Extracellular side of the membrane; the sequence is MEVTGTPSSYSNRNCTIENFKKEFYP. N14 carries an N-linked (GlcNAc...) asparagine glycan. A helical transmembrane segment spans residues 27–47; the sequence is IIYLIIFFWGALGNGFSIYVF. Over 48–56 the chain is Cytoplasmic; sequence LQTCKKSTS. Residues 57–77 traverse the membrane as a helical segment; sequence VNVFMLNLATSDFLFISTLPF. The Extracellular portion of the chain corresponds to 78–98; that stretch reads RADYYFRGSNWIFGDLACRVM. An intrachain disulfide couples C95 to C171. A helical transmembrane segment spans residues 99–119; it reads SYSLYVNMYTSIYFLTVLSVV. The Cytoplasmic portion of the chain corresponds to 120 to 138; it reads RFLATVHPFRMFHVTSVRS. A helical membrane pass occupies residues 139–159; sequence AWILCGIIWVFIMASSALLLV. Topologically, residues 160–187 are extracellular; sequence NGQEEKDNIISCLELSPQKFKSLLIMNH. A helical membrane pass occupies residues 188 to 208; the sequence is IAVAVGFLLPFLTLTVCYLLI. Over 209-229 the chain is Cytoplasmic; sequence IRILLKAEIPESGPRAAHRKA. A helical membrane pass occupies residues 230–250; sequence LTTIVIAMITFLLCFLPYHAL. Over 251–271 the chain is Extracellular; it reads RTLHLVTWDKDSCGDVLHKAT. The helical transmembrane segment at 272 to 292 threads the bilayer; that stretch reads VITLTMAAANSCFNPFLYYFA. Over 293 to 309 the chain is Cytoplasmic; it reads GENFKARLRAIFSKVHL.

The protein belongs to the G-protein coupled receptor 1 family. In terms of tissue distribution, widely expressed at low levels, with highest expression in the spleen, thymus and adrenal gland, and lower in the kidney, brain and peripheral blood leukocytes.

The protein resides in the cell membrane. Receptor for cysteinyl leukotrienes. The response is mediated via a G-protein that activates a phosphatidylinositol-calcium second messenger system. The rank order of affinities for the leukotrienes is LTC4 = LTD4 &gt;&gt; LTE4. The polypeptide is Cysteinyl leukotriene receptor 2 (Cysltr2) (Mus musculus (Mouse)).